The primary structure comprises 230 residues: MSEIKDIVVQGLWKNNSALVQLLGLCPLLAVTSTATNALGLGLATTLVLTLTNLTVSTLRRWTPAEIRIPIYVMIIASVVSAVQMLINAYAFGLYQSLGIFIPLIVTNCIVVGRAEAFAAKKGPWLSALDGFSIGMGATGAMFVLGSLREILGNGTLFDGADSLLGGWAKVLRVEIFHTDSPFLLAMLPPGAFIGLGLMLAVKYLIDEKMKKRRAETAPSAVPAGETGKV.

5 helical membrane passes run 22 to 42 (LLGL…LGLG), 63 to 83 (TPAE…VSAV), 86 to 106 (LINA…PLIV), 125 to 145 (WLSA…MFVL), and 182 to 202 (PFLL…MLAV).

Belongs to the NqrDE/RnfAE family. As to quaternary structure, the complex is composed of six subunits: RsxA, RsxB, RsxC, RsxD, RsxE and RsxG.

It is found in the cell inner membrane. Functionally, part of a membrane-bound complex that couples electron transfer with translocation of ions across the membrane. Required to maintain the reduced state of SoxR. The polypeptide is Ion-translocating oxidoreductase complex subunit E (Salmonella paratyphi A (strain ATCC 9150 / SARB42)).